The following is a 439-amino-acid chain: Enolase (439 aa).

Residue Gln163 participates in (2R)-2-phosphoglycerate binding. Glu205 functions as the Proton donor in the catalytic mechanism. The Mg(2+) site is built by Asp242, Glu287, and Asp314. Positions 339, 368, 369, and 390 each coordinate (2R)-2-phosphoglycerate. Lys339 serves as the catalytic Proton acceptor.

It belongs to the enolase family. The cofactor is Mg(2+).

It localises to the cytoplasm. The protein resides in the secreted. The protein localises to the cell surface. The catalysed reaction is (2R)-2-phosphoglycerate = phosphoenolpyruvate + H2O. It functions in the pathway carbohydrate degradation; glycolysis; pyruvate from D-glyceraldehyde 3-phosphate: step 4/5. Its function is as follows. Catalyzes the reversible conversion of 2-phosphoglycerate (2-PG) into phosphoenolpyruvate (PEP). It is essential for the degradation of carbohydrates via glycolysis. The chain is Enolase from Levilactobacillus brevis (strain ATCC 367 / BCRC 12310 / CIP 105137 / JCM 1170 / LMG 11437 / NCIMB 947 / NCTC 947) (Lactobacillus brevis).